Reading from the N-terminus, the 361-residue chain is Cytochrome c peroxidase, mitochondrial (361 aa).

The N-terminal 67 residues, 1–67 (MTTAVRLLPS…NWGKAAALAS (67 aa)), are a transit peptide targeting the mitochondrion. The active-site Proton acceptor is histidine 119. The residue at position 220 (tyrosine 220) is a Phosphotyrosine. Histidine 242 contacts heme b. Residue tryptophan 258 is the Tryptophan radical intermediate of the active site.

It belongs to the peroxidase family. Cytochrome c peroxidase subfamily. As to quaternary structure, forms a one-to-one complex with cytochrome c. Requires heme b as cofactor. CCP1 precursor is processed by the rhomboid protease PCP1, which cleaves the N-terminal hydrophobic transit peptide. The m-AAA protease (composed of YTA12/RCA1 and YTA10/AFG3) is required for CCP1 maturation: m-AAA protease promotes membrane dislocation of the CCP1 transmembrane segment within the transit peptide to ensure the correct positioning of CCP1 within the membrane bilayer, allowing intramembrane cleavage by PCP1.

Its subcellular location is the mitochondrion matrix. The protein localises to the mitochondrion intermembrane space. The enzyme catalyses 2 Fe(II)-[cytochrome c] + H2O2 + 2 H(+) = 2 Fe(III)-[cytochrome c] + 2 H2O. Its function is as follows. Destroys radicals which are normally produced within the cells and which are toxic to biological systems. The polypeptide is Cytochrome c peroxidase, mitochondrial (CCP1) (Saccharomyces cerevisiae (strain ATCC 204508 / S288c) (Baker's yeast)).